We begin with the raw amino-acid sequence, 716 residues long: Polyribonucleotide nucleotidyltransferase (716 aa).

Residues Asp490 and Asp496 each coordinate Mg(2+). A KH domain is found at Pro556–Ile615. An S1 motif domain is found at Gly625 to Lys693. A disordered region spans residues Val695 to Ala716. The span at Gln704–Ala716 shows a compositional bias: basic and acidic residues.

Belongs to the polyribonucleotide nucleotidyltransferase family. The cofactor is Mg(2+).

The protein localises to the cytoplasm. It catalyses the reaction RNA(n+1) + phosphate = RNA(n) + a ribonucleoside 5'-diphosphate. In terms of biological role, involved in mRNA degradation. Catalyzes the phosphorolysis of single-stranded polyribonucleotides processively in the 3'- to 5'-direction. The sequence is that of Polyribonucleotide nucleotidyltransferase from Cereibacter sphaeroides (strain KD131 / KCTC 12085) (Rhodobacter sphaeroides).